The primary structure comprises 1293 residues: MSQHLPLVAAQPGIWMAEKLSELPSAWSVAHYVELTGEVDAPLLARAVVAGLAQADTLRMRFTEDNGEVWQWVDDALIFELPEIIDLRTNIDPHGTAQALMQADLQQDLRVDSGKPLVFHQLIQVADNRWYWYQRYHHLLVDGFSFPAITRQIANIYCALLRGEQTPASPFTPFADVVEEYQQYRESEAWQRDAAFWAEQRRQLPPPASLSPAPLAGRSASADILRLKLEFTDGEFRQLATQLSGVQRTDLALALAAFWLGRLCNRMDYAAGFIFMRRLGSAALTATGPVLNVLPLGIHIAAQETLPELATRLAAQLKKMRRHQRYDAEQIVRDSGRAAGDEPLFGPVLNIKVFDYQLDIPGVQAQTHTLATGPVNDLELALFPDEHGDLSIEILANKQHYDEPTLIQHAERLKMLIAQFAADPALLCGDVDIMLPGEYAQLAQINATQVEIPETTLSALVAEQAAKTPDAPALADARYQFSYREMREQVVALANLLREHGVKPGDSVAVALPRSVFLTLALHAIVEAGAAWLPLDTGYPDDRLKMMLEDARPSLLITTDDQLPRFADVPDLTNLCYNAPLTPQGSAPLQLSQPHHTAYIIFTSGSTGRPKGVMVGQTAIVNRLLWMQNHYPLTGEDVVAQKTPCSFDVSVWEFFWPFIAGAKLVMAEPEAHRDPLAMQQFFAEYGVTTTHFVPSMLAAFVASLTPQTARQNCATLKQVFCSGEALPADLCREWQQLTGAPLHNLYGPTEAAVDVSWYPAFGEELAQVRGSSVPIGYPVWNTGLRILDAMMHPVPPGVAGDLYLTGIQLAQGYLGRPDLTASRFIADPFVPGERMYRTGDVARWLDNGAVEYLGRSDDQLKIRGQRIELGEIDRVMQALPDVEQAVTHACVINQAAATGGDARQLVGYLVSQSGLPLDTSALQAQLRETLPPHMAPVVLLQLPQLPLSANGKLDRKALPLPELKAQTPGRAPKAGSETIIAAAFASLLGCDVQDADADFFALGGHSLLAMKLAAQLSRQFARQVTPGQVMVASTVAKLATIIDGEEDSSRRMGFETILPLREGNGPTLFCFHPASGFAWQFSVLSRYLDPLWSIIGIQSPRPHGPMQTATNLDEVCEAHLATLLEQQPHGPYYLLGYSLGGTLAQGIAARLRARGEQVAFLGLLDTWPPETQNWQEKEANGLDPEVLAEINREREAFLAAQQGSTSTELFTTIEGNYADAVRLLTTAHSVPFDGKATLFVAERTLQEGMSPERAWSPWIAELDIYRQDCAHVDIISPGAFEKIGPIIRATLNR.

The interval 1-301 (MSQHLPLVAA…NVLPLGIHIA (301 aa)) is elongation/condensation. The adenylation stretch occupies residues 482 to 887 (SYREMREQVV…ALPDVEQAVT (406 aa)). In terms of domain architecture, Carrier spans 971-1046 (APKAGSETII…KLATIIDGEE (76 aa)). S1006 carries the post-translational modification O-(pantetheine 4'-phosphoryl)serine. The tract at residues 1066–1293 (PTLFCFHPAS…GPIIRATLNR (228 aa)) is thioesterase. The Proton acceptor; for thioesterase activity role is filled by H1271.

It belongs to the ATP-dependent AMP-binding enzyme family. EntF subfamily. Proteins EntB, EntD, EntE and EntF are the component of the enterobactin synthase. Components probably do not form a stable complex. EntF acts as a catalytic monomer. Requires pantetheine 4'-phosphate as cofactor. 4'-phosphopantetheine is transferred from CoA to a specific serine of apo-EntF by EntD. Holo-EntF so formed is then acylated with seryl-AMP.

The protein resides in the cytoplasm. The catalysed reaction is 3 2,3-dihydroxybenzoate + 3 L-serine + 6 ATP = enterobactin + 6 AMP + 6 diphosphate + 4 H(+). It carries out the reaction holo-[peptidyl-carrier protein] + L-serine + ATP = L-seryl-[peptidyl-carrier protein] + AMP + diphosphate. The protein operates within siderophore biosynthesis; enterobactin biosynthesis. Involved in the biosynthesis of the siderophore enterobactin (enterochelin), which is a macrocyclic trimeric lactone of N-(2,3-dihydroxybenzoyl)-serine. EntF catalyzes the activation of L-serine via ATP-dependent PPi exchange reaction to form seryladenylate. Activated L-serine is loaded onto the peptidyl carrier domain via a thioester linkage to the phosphopanthetheine moiety, forming seryl-S-Ppant-EntF. EntF acts then as the sole catalyst for the formation of the three amide and three ester linkages found in enterobactin, using seryladenylate and 2,3-dihydroxybenzoate-S-Ppant-EntB (DHB-S-Ppant-EntB) as substrates, via the formation of a DHB-Ser-S-Ppant-EntF intermediate. In Escherichia coli O157:H7, this protein is Enterobactin synthase component F (entF).